The following is a 121-amino-acid chain: Chromosome transmission fidelity protein 8 homolog (121 aa).

This sequence belongs to the CTF8 family. Component of the CTF18-RFC complex, which consists of CTF18, CTF8, DSCC1, RFC2, RFC3, RFC4 and RFC5. The CTF18-RFC complex does not interact with the Rad9/Rad1/Hus1 complex. The CTF18-RFC complex interacts with POLH. CTF18/CTF8/DSCC1 associate with PCNA. CTF8 exists as a dimer with DSCC1.

It localises to the nucleus. Functionally, chromosome cohesion factor involved in sister chromatid cohesion and fidelity of chromosome transmission. Component of one of the cell nuclear antigen loader complexes, CTF18-replication factor C (CTF18-RFC), which consists of CTF18, CTF8, DSCC1, RFC2, RFC3, RFC4 and RFC5. The CTF18-RFC complex binds to single-stranded and primed DNAs and has weak ATPase activity that is stimulated the presence of primed DNA, replication protein A (RPA) and proliferating cell nuclear antigen (PCNA). The CTF18-RFC complex catalyzes the ATP-dependent loading of PCNA onto primed and gapped DNA. It also interacts with and stimulates POLH, which is suggestive of a protein network that coordinates DNA repair, recombination and chromosome cohesion reactions with replication fork progression. This chain is Chromosome transmission fidelity protein 8 homolog, found in Homo sapiens (Human).